Consider the following 1023-residue polypeptide: NLR family CARD domain-containing protein 4 (1023 aa).

The region spanning 1 to 88 (MNFIKENSQA…PVYQDLTGHS (88 aa)) is the CARD domain. Positions 95-298 (EEDLDVLAQS…HVGALTVEVG (204 aa)) are nucleotide-binding domain (NBD). The NACHT domain maps to 163 to 476 (SPCLIEGESG…VSKGNSYLKK (314 aa)). Residue 169 to 176 (GESGKGKS) coordinates ATP. The interval 356-463 (AHTQTMLFQT…RLSSLLKSRE (108 aa)) is winged-helix domain (WHD). S533 carries the post-translational modification Phosphoserine. LRR repeat units follow at residues 578 to 598 (FFQG…LFDF), 655 to 678 (MQKF…DIKY), 734 to 757 (VTDL…LADS), 761 to 784 (LKNL…SLAE), 786 to 811 (LRNL…DYIV), 823 to 846 (EMKL…LHNL), 847 to 869 (VKLS…ALQG), 877 to 901 (LEQL…LLKQ), 910 to 932 (KLGL…FLEM), 935 to 962 (LRDL…VFEN), 964 to 984 (KQLV…ALVR), and 998 to 1020 (EARL…TFKL).

As to quaternary structure, homooligomer; homooligomerizes following activation of Naip proteins by pathogenic proteins such as S.typhimurium (Salmonella) flagellin or PrgJ. Component of the NLRC4 inflammasome, at least composed of NLRC4, caspase-1 (CASP1) and some NAIP family member. Interacts with EIF2AK2/PKR. In terms of processing, phosphorylated at Ser-533 following infection of macrophages with S.typhimurium (Salmonella). Phosphorylation is essential for NLRC4 inflammasome function to promote caspase-1 activation and pyroptosis. PRKCD phosphorylates Ser-533 in vitro.

It localises to the cytoplasm. It is found in the cytosol. Its function is as follows. Key component of inflammasomes that indirectly senses specific proteins from pathogenic bacteria and fungi and responds by assembling an inflammasome complex that promotes caspase-1 activation, cytokine production and macrophage pyroptosis. The NLRC4 inflammasome is activated as part of the innate immune response to a range of intracellular bacteria. The polypeptide is NLR family CARD domain-containing protein 4 (Nlrc4) (Rattus norvegicus (Rat)).